The primary structure comprises 271 residues: 3-methyl-2-oxobutanoate hydroxymethyltransferase (271 aa).

Positions 51 and 90 each coordinate Mg(2+). Residues 51–52 (DS), D90, and K118 each bind 3-methyl-2-oxobutanoate. Position 120 (E120) interacts with Mg(2+). E186 (proton acceptor) is an active-site residue.

Belongs to the PanB family. In terms of assembly, homodecamer; pentamer of dimers. The cofactor is Mg(2+).

It localises to the cytoplasm. The catalysed reaction is 3-methyl-2-oxobutanoate + (6R)-5,10-methylene-5,6,7,8-tetrahydrofolate + H2O = 2-dehydropantoate + (6S)-5,6,7,8-tetrahydrofolate. It functions in the pathway cofactor biosynthesis; (R)-pantothenate biosynthesis; (R)-pantoate from 3-methyl-2-oxobutanoate: step 1/2. Its function is as follows. Catalyzes the reversible reaction in which hydroxymethyl group from 5,10-methylenetetrahydrofolate is transferred onto alpha-ketoisovalerate to form ketopantoate. In Xanthomonas axonopodis pv. citri (strain 306), this protein is 3-methyl-2-oxobutanoate hydroxymethyltransferase.